A 494-amino-acid polypeptide reads, in one-letter code: Argininosuccinate lyase (494 aa).

This sequence belongs to the lyase 1 family. Argininosuccinate lyase subfamily.

Its subcellular location is the cytoplasm. It catalyses the reaction 2-(N(omega)-L-arginino)succinate = fumarate + L-arginine. It functions in the pathway amino-acid biosynthesis; L-arginine biosynthesis; L-arginine from L-ornithine and carbamoyl phosphate: step 3/3. The chain is Argininosuccinate lyase from Methanosphaerula palustris (strain ATCC BAA-1556 / DSM 19958 / E1-9c).